The sequence spans 621 residues: Phosphoenolpyruvate carboxykinase [GTP] (621 aa).

Substrate-binding positions include arginine 82 and 220 to 222 (YGG). Mn(2+) contacts are provided by lysine 229 and histidine 249. Serine 271 provides a ligand contact to substrate. Position 272-277 (272-277 (QCGKTN)) interacts with GTP. Cysteine 273 is a catalytic residue. Aspartate 296 is a binding site for Mn(2+). 386–388 (NSR) provides a ligand contact to substrate. Residues arginine 388, arginine 419, and 514–517 (FGEN) contribute to the GTP site.

It belongs to the phosphoenolpyruvate carboxykinase [GTP] family. Monomer. Requires Mn(2+) as cofactor.

Its subcellular location is the cytoplasm. It carries out the reaction oxaloacetate + GTP = phosphoenolpyruvate + GDP + CO2. The protein operates within carbohydrate biosynthesis; gluconeogenesis. In terms of biological role, catalyzes the conversion of oxaloacetate (OAA) to phosphoenolpyruvate (PEP), the rate-limiting step in the metabolic pathway that produces glucose from lactate and other precursors derived from the citric acid cycle. In Corynebacterium kroppenstedtii (strain DSM 44385 / JCM 11950 / CIP 105744 / CCUG 35717), this protein is Phosphoenolpyruvate carboxykinase [GTP].